Here is a 430-residue protein sequence, read N- to C-terminus: tRNA(Ile)-lysidine synthase (430 aa).

An ATP-binding site is contributed by 21–26 (SGGLDS).

The protein belongs to the tRNA(Ile)-lysidine synthase family.

It is found in the cytoplasm. The catalysed reaction is cytidine(34) in tRNA(Ile2) + L-lysine + ATP = lysidine(34) in tRNA(Ile2) + AMP + diphosphate + H(+). Its function is as follows. Ligates lysine onto the cytidine present at position 34 of the AUA codon-specific tRNA(Ile) that contains the anticodon CAU, in an ATP-dependent manner. Cytidine is converted to lysidine, thus changing the amino acid specificity of the tRNA from methionine to isoleucine. The sequence is that of tRNA(Ile)-lysidine synthase from Salmonella paratyphi B (strain ATCC BAA-1250 / SPB7).